The primary structure comprises 96 residues: Aspartyl/glutamyl-tRNA(Asn/Gln) amidotransferase subunit C (96 aa).

It belongs to the GatC family. Heterotrimer of A, B and C subunits.

It catalyses the reaction L-glutamyl-tRNA(Gln) + L-glutamine + ATP + H2O = L-glutaminyl-tRNA(Gln) + L-glutamate + ADP + phosphate + H(+). The catalysed reaction is L-aspartyl-tRNA(Asn) + L-glutamine + ATP + H2O = L-asparaginyl-tRNA(Asn) + L-glutamate + ADP + phosphate + 2 H(+). Its function is as follows. Allows the formation of correctly charged Asn-tRNA(Asn) or Gln-tRNA(Gln) through the transamidation of misacylated Asp-tRNA(Asn) or Glu-tRNA(Gln) in organisms which lack either or both of asparaginyl-tRNA or glutaminyl-tRNA synthetases. The reaction takes place in the presence of glutamine and ATP through an activated phospho-Asp-tRNA(Asn) or phospho-Glu-tRNA(Gln). The protein is Aspartyl/glutamyl-tRNA(Asn/Gln) amidotransferase subunit C of Bacillus licheniformis (strain ATCC 14580 / DSM 13 / JCM 2505 / CCUG 7422 / NBRC 12200 / NCIMB 9375 / NCTC 10341 / NRRL NRS-1264 / Gibson 46).